The primary structure comprises 256 residues: Diacetyl reductase [(S)-acetoin forming] (256 aa).

Residues 6 to 33 and Asp-59 each bind NAD(+); that span reads LVTG…AIAD. Ser-139 serves as a coordination point for substrate. Tyr-152 acts as the Proton acceptor in catalysis. Lys-156 is a binding site for NAD(+).

The protein belongs to the short-chain dehydrogenases/reductases (SDR) family. Homotetramer.

The enzyme catalyses (S)-acetoin + NAD(+) = diacetyl + NADH + H(+). Catalyzes the reversible reduction of (S)-acetoin to 2,3-butanediol in the presence of NADH. In Klebsiella pneumoniae, this protein is Diacetyl reductase [(S)-acetoin forming] (budC).